Consider the following 251-residue polypeptide: MNLISIPAFQDNYIWVLADDKDRCVIVDPGEAAPVLKAIEENGWQPEAILLTHHHNDHVGGVPALCAKFPHLEVYGPQETQNKGTTCVVDEGQNVLILEWEFSVFATPGHTSGHICFYSSPYLFCGDTMFSGGCGRLFEGTPEQMYQSFQKINALPEETIICCAHEYTLANMKFAASILPEDRAIQDYYHKVKELRAKNLSTLPVILKNEREINLFLRTDDIDLINKINQETKLQQPEQRFAWLRSKKDNF.

Residues His53, His55, Asp57, His58, His110, Asp127, and His165 each coordinate Zn(2+).

The protein belongs to the metallo-beta-lactamase superfamily. Glyoxalase II family. As to quaternary structure, monomer. Requires Zn(2+) as cofactor.

The catalysed reaction is an S-(2-hydroxyacyl)glutathione + H2O = a 2-hydroxy carboxylate + glutathione + H(+). It functions in the pathway secondary metabolite metabolism; methylglyoxal degradation; (R)-lactate from methylglyoxal: step 2/2. Functionally, thiolesterase that catalyzes the hydrolysis of S-D-lactoyl-glutathione to form glutathione and D-lactic acid. The chain is Hydroxyacylglutathione hydrolase from Enterobacter sp. (strain 638).